We begin with the raw amino-acid sequence, 330 residues long: Aspartate--ammonia ligase (330 aa).

Belongs to the class-II aminoacyl-tRNA synthetase family. AsnA subfamily.

It localises to the cytoplasm. The catalysed reaction is L-aspartate + NH4(+) + ATP = L-asparagine + AMP + diphosphate + H(+). It participates in amino-acid biosynthesis; L-asparagine biosynthesis; L-asparagine from L-aspartate (ammonia route): step 1/1. In Streptococcus equi subsp. equi (strain 4047), this protein is Aspartate--ammonia ligase.